Consider the following 286-residue polypeptide: Bifunctional protein FolD (286 aa).

NADP(+) contacts are provided by residues 165 to 167 and S190; that span reads GRS.

Belongs to the tetrahydrofolate dehydrogenase/cyclohydrolase family. In terms of assembly, homodimer.

It catalyses the reaction (6R)-5,10-methylene-5,6,7,8-tetrahydrofolate + NADP(+) = (6R)-5,10-methenyltetrahydrofolate + NADPH. The enzyme catalyses (6R)-5,10-methenyltetrahydrofolate + H2O = (6R)-10-formyltetrahydrofolate + H(+). It functions in the pathway one-carbon metabolism; tetrahydrofolate interconversion. Functionally, catalyzes the oxidation of 5,10-methylenetetrahydrofolate to 5,10-methenyltetrahydrofolate and then the hydrolysis of 5,10-methenyltetrahydrofolate to 10-formyltetrahydrofolate. This is Bifunctional protein FolD from Burkholderia cenocepacia (strain ATCC BAA-245 / DSM 16553 / LMG 16656 / NCTC 13227 / J2315 / CF5610) (Burkholderia cepacia (strain J2315)).